A 170-amino-acid chain; its full sequence is Shikimate kinase (170 aa).

Leucine 11–threonine 16 contributes to the ATP binding site. Serine 15 is a Mg(2+) binding site. Substrate is bound by residues aspartate 33, arginine 57, and glycine 79. Residue arginine 119 coordinates ATP. Arginine 137 contributes to the substrate binding site.

Belongs to the shikimate kinase family. Monomer. The cofactor is Mg(2+).

The protein resides in the cytoplasm. The catalysed reaction is shikimate + ATP = 3-phosphoshikimate + ADP + H(+). The protein operates within metabolic intermediate biosynthesis; chorismate biosynthesis; chorismate from D-erythrose 4-phosphate and phosphoenolpyruvate: step 5/7. In terms of biological role, catalyzes the specific phosphorylation of the 3-hydroxyl group of shikimic acid using ATP as a cosubstrate. This is Shikimate kinase from Clostridium botulinum (strain Kyoto / Type A2).